The primary structure comprises 189 residues: Elongation factor P (189 aa).

N6-(3,6-diaminohexanoyl)-5-hydroxylysine is present on Lys-34.

Belongs to the elongation factor P family. In terms of processing, may be beta-lysylated on the epsilon-amino group of Lys-34 by the combined action of EpmA and EpmB, and then hydroxylated on the C5 position of the same residue by EpmC (if this protein is present). Lysylation is critical for the stimulatory effect of EF-P on peptide-bond formation. The lysylation moiety may extend toward the peptidyltransferase center and stabilize the terminal 3-CCA end of the tRNA. Hydroxylation of the C5 position on Lys-34 may allow additional potential stabilizing hydrogen-bond interactions with the P-tRNA.

It is found in the cytoplasm. The protein operates within protein biosynthesis; polypeptide chain elongation. Functionally, involved in peptide bond synthesis. Alleviates ribosome stalling that occurs when 3 or more consecutive Pro residues or the sequence PPG is present in a protein, possibly by augmenting the peptidyl transferase activity of the ribosome. Modification of Lys-34 is required for alleviation. The protein is Elongation factor P of Alcanivorax borkumensis (strain ATCC 700651 / DSM 11573 / NCIMB 13689 / SK2).